Here is a 118-residue protein sequence, read N- to C-terminus: Hydrogenase maturation factor HypA (118 aa).

His-2 is a binding site for Ni(2+). Residues Cys-74, Cys-77, Cys-91, and Cys-94 each contribute to the Zn(2+) site.

Belongs to the HypA/HybF family.

Functionally, involved in the maturation of [NiFe] hydrogenases. Required for nickel insertion into the metal center of the hydrogenase. This Helicobacter hepaticus (strain ATCC 51449 / 3B1) protein is Hydrogenase maturation factor HypA.